The chain runs to 918 residues: Serine/threonine-protein kinase D1 (918 aa).

Phosphotyrosine is present on Tyr-93. Residues 144-194 (PHALFVHSYRAPAFCDHCGEMLWGLVRQGLKCEGCGLNYHKRCAFKIPNNC) form a Phorbol-ester/DAG-type 1 zinc finger. Ser-203, Ser-206, Ser-217, and Ser-221 each carry phosphoserine. The segment at 276-326 (PHTFVIHSYTRPTVCQFCKKLLKGLFRQGLQCKDCRFNCHKRCAPKVPNNC) adopts a Phorbol-ester/DAG-type 2 zinc-finger fold. Disordered regions lie at residues 338–362 (SPGA…NSGL) and 380–408 (EGQS…STSN). Composition is skewed to acidic residues over residues 345 to 355 (VVMEEGSDDND) and 387 to 396 (EMQDPDADQE). Position 351 is a phosphoserine (Ser-351). Residues Ser-403 and Ser-407 each carry the phosphoserine; by MAPK13 modification. In terms of domain architecture, PH spans 428–547 (TVMKEGWMVH…WEVAIQHALM (120 aa)). Residue Tyr-438 is modified to Phosphotyrosine. The residue at position 454 (Ser-454) is a Phosphoserine. Tyr-469 carries the phosphotyrosine; by ABL modification. Residue Tyr-508 is modified to Phosphotyrosine. Ser-554 is subject to Phosphoserine. Residues 589-845 (IFPDEVLGSG…VDKTLSHPWL (257 aa)) enclose the Protein kinase domain. ATP-binding positions include 595 to 603 (LGSGQFGIV) and Lys-618. The active-site Proton acceptor is Asp-712. The residue at position 744 (Ser-744) is a Phosphoserine; by PKC/PRKCD. A Phosphoserine; by autocatalysis and PKC/PRKCD modification is found at Ser-748. The residue at position 755 (Tyr-755) is a Phosphotyrosine. Ser-916 carries the post-translational modification Phosphoserine; by autocatalysis.

This sequence belongs to the protein kinase superfamily. CAMK Ser/Thr protein kinase family. PKD subfamily. In terms of assembly, interacts (via N-terminus) with ADAP1/CENTA1. Interacts with MAPK13. Interacts with DAPK1 in an oxidative stress-regulated manner. Interacts with USP28; the interaction induces phosphorylation of USP28 and activated KRAS-mediated stabilization of ZNF304. Interacts with AKAP13 (via C-terminal domain). Requires Mg(2+) as cofactor. Post-translationally, phosphorylated at Ser-403 and Ser-407 by MAPK13 during regulation of insulin secretion in pancreatic beta cells. Phosphorylated by DAPK1. Phosphorylated at Tyr-93 and by ABL at Tyr-469, which primes the kinase in response to oxidative stress, and promotes a second step activating phosphorylation at Ser-744/Ser-748 by PKRD. Phosphorylated on Ser-916 upon S.enterica infection in macrophages.

It localises to the cytoplasm. It is found in the cell membrane. The protein localises to the golgi apparatus. Its subcellular location is the trans-Golgi network. The catalysed reaction is L-seryl-[protein] + ATP = O-phospho-L-seryl-[protein] + ADP + H(+). The enzyme catalyses L-threonyl-[protein] + ATP = O-phospho-L-threonyl-[protein] + ADP + H(+). Its activity is regulated as follows. Activated by DAG and phorbol esters. Phorbol-ester/DAG-type domain 1 binds DAG with high affinity and appears to play the dominant role in mediating translocation to the cell membrane and trans-Golgi network. Phorbol-ester/DAG-type domain 2 binds phorbol ester with higher affinity. Autophosphorylation of Ser-748 and phosphorylation of Ser-744 by PKC relieves auto-inhibition by the PH domain. Phosphorylation on Tyr-469 by the SRC-ABL1 pathway in response to oxidative stress, is also required for activation. Activated by DAPK1 under oxidative stress. Functionally, serine/threonine-protein kinase that converts transient diacylglycerol (DAG) signals into prolonged physiological effects downstream of PKC, and is involved in the regulation of MAPK8/JNK1 and Ras signaling, Golgi membrane integrity and trafficking, cell survival through NF-kappa-B activation, cell migration, cell differentiation by mediating HDAC7 nuclear export, cell proliferation via MAPK1/3 (ERK1/2) signaling, and plays a role in cardiac hypertrophy, VEGFA-induced angiogenesis, genotoxic-induced apoptosis and flagellin-stimulated inflammatory response. Phosphorylates the epidermal growth factor receptor (EGFR) on dual threonine residues, which leads to the suppression of epidermal growth factor (EGF)-induced MAPK8/JNK1 activation and subsequent JUN phosphorylation. Phosphorylates RIN1, inducing RIN1 binding to 14-3-3 proteins YWHAB, YWHAE and YWHAZ and increased competition with RAF1 for binding to GTP-bound form of Ras proteins (NRAS, HRAS and KRAS). Acts downstream of the heterotrimeric G-protein beta/gamma-subunit complex to maintain the structural integrity of the Golgi membranes, and is required for protein transport along the secretory pathway. In the trans-Golgi network (TGN), regulates the fission of transport vesicles that are on their way to the plasma membrane. May act by activating the lipid kinase phosphatidylinositol 4-kinase beta (PI4KB) at the TGN for the local synthesis of phosphorylated inositol lipids, which induces a sequential production of DAG, phosphatidic acid (PA) and lyso-PA (LPA) that are necessary for membrane fission and generation of specific transport carriers to the cell surface. Under oxidative stress, is phosphorylated at Tyr-469 via SRC-ABL1 and contributes to cell survival by activating IKK complex and subsequent nuclear translocation and activation of NFKB1. Involved in cell migration by regulating integrin alpha-5/beta-3 recycling and promoting its recruitment in newly forming focal adhesion. In osteoblast differentiation, mediates the bone morphogenetic protein 2 (BMP2)-induced nuclear export of HDAC7, which results in the inhibition of HDAC7 transcriptional repression of RUNX2. In neurons, plays an important role in neuronal polarity by regulating the biogenesis of TGN-derived dendritic vesicles, and is involved in the maintenance of dendritic arborization and Golgi structure in hippocampal cells. May potentiate mitogenesis induced by the neuropeptide bombesin or vasopressin by mediating an increase in the duration of MAPK1/3 (ERK1/2) signaling, which leads to accumulation of immediate-early gene products including FOS that stimulate cell cycle progression. Plays an important role in the proliferative response induced by low calcium in keratinocytes, through sustained activation of MAPK1/3 (ERK1/2) pathway. Downstream of novel PKC signaling, plays a role in cardiac hypertrophy by phosphorylating HDAC5, which in turn triggers XPO1/CRM1-dependent nuclear export of HDAC5, MEF2A transcriptional activation and induction of downstream target genes that promote myocyte hypertrophy and pathological cardiac remodeling. Mediates cardiac troponin I (TNNI3) phosphorylation at the PKA sites, which results in reduced myofilament calcium sensitivity, and accelerated crossbridge cycling kinetics. The PRKD1-HDAC5 pathway is also involved in angiogenesis by mediating VEGFA-induced specific subset of gene expression, cell migration, and tube formation. In response to VEGFA, is necessary and required for HDAC7 phosphorylation which induces HDAC7 nuclear export and endothelial cell proliferation and migration. During apoptosis induced by cytarabine and other genotoxic agents, PRKD1 is cleaved by caspase-3 at Asp-378, resulting in activation of its kinase function and increased sensitivity of cells to the cytotoxic effects of genotoxic agents. In epithelial cells, is required for transducing flagellin-stimulated inflammatory responses by binding and phosphorylating TLR5, which contributes to MAPK14/p38 activation and production of inflammatory cytokines. Acts as an activator of NLRP3 inflammasome assembly by mediating phosphorylation of NLRP3. May play a role in inflammatory response by mediating activation of NF-kappa-B. May be involved in pain transmission by directly modulating TRPV1 receptor. Plays a role in activated KRAS-mediated stabilization of ZNF304 in colorectal cancer (CRC) cells. Regulates nuclear translocation of transcription factor TFEB in macrophages upon live S.enterica infection. This is Serine/threonine-protein kinase D1 (Prkd1) from Rattus norvegicus (Rat).